The sequence spans 100 residues: NADH-quinone oxidoreductase subunit K (100 aa).

3 helical membrane-spanning segments follow: residues 2–22, 29–49, and 63–83; these read ITLSHYLVVAALMFVLGLIGI, IMLFFSSEILLNAANVALAAI, and LFIVAVAASEVAVGLGLLILW.

Belongs to the complex I subunit 4L family. NDH-1 is composed of 14 different subunits. Subunits NuoA, H, J, K, L, M, N constitute the membrane sector of the complex.

It localises to the cell inner membrane. It catalyses the reaction a quinone + NADH + 5 H(+)(in) = a quinol + NAD(+) + 4 H(+)(out). NDH-1 shuttles electrons from NADH, via FMN and iron-sulfur (Fe-S) centers, to quinones in the respiratory chain. The immediate electron acceptor for the enzyme in this species is believed to be ubiquinone. Couples the redox reaction to proton translocation (for every two electrons transferred, four hydrogen ions are translocated across the cytoplasmic membrane), and thus conserves the redox energy in a proton gradient. This chain is NADH-quinone oxidoreductase subunit K, found in Campylobacter curvus (strain 525.92).